Here is a 163-residue protein sequence, read N- to C-terminus: Nucleotide-binding protein PC1_1036 (163 aa).

Belongs to the YajQ family.

Its function is as follows. Nucleotide-binding protein. The polypeptide is Nucleotide-binding protein PC1_1036 (Pectobacterium carotovorum subsp. carotovorum (strain PC1)).